The chain runs to 251 residues: 4-hydroxy-tetrahydrodipicolinate reductase (251 aa).

Residues G9–M14, A85–T87, and S109–M112 contribute to the NAD(+) site. Residue H141 is the Proton donor/acceptor of the active site. Residue H142 coordinates (S)-2,3,4,5-tetrahydrodipicolinate. K145 serves as the catalytic Proton donor. G151–T152 contributes to the (S)-2,3,4,5-tetrahydrodipicolinate binding site.

This sequence belongs to the DapB family.

It localises to the cytoplasm. It carries out the reaction (S)-2,3,4,5-tetrahydrodipicolinate + NAD(+) + H2O = (2S,4S)-4-hydroxy-2,3,4,5-tetrahydrodipicolinate + NADH + H(+). The enzyme catalyses (S)-2,3,4,5-tetrahydrodipicolinate + NADP(+) + H2O = (2S,4S)-4-hydroxy-2,3,4,5-tetrahydrodipicolinate + NADPH + H(+). The protein operates within amino-acid biosynthesis; L-lysine biosynthesis via DAP pathway; (S)-tetrahydrodipicolinate from L-aspartate: step 4/4. Functionally, catalyzes the conversion of 4-hydroxy-tetrahydrodipicolinate (HTPA) to tetrahydrodipicolinate. The polypeptide is 4-hydroxy-tetrahydrodipicolinate reductase (Caldanaerobacter subterraneus subsp. tengcongensis (strain DSM 15242 / JCM 11007 / NBRC 100824 / MB4) (Thermoanaerobacter tengcongensis)).